We begin with the raw amino-acid sequence, 497 residues long: Probable malate:quinone oxidoreductase (497 aa).

This sequence belongs to the MQO family. It depends on FAD as a cofactor.

It catalyses the reaction (S)-malate + a quinone = a quinol + oxaloacetate. The protein operates within carbohydrate metabolism; tricarboxylic acid cycle; oxaloacetate from (S)-malate (quinone route): step 1/1. This chain is Probable malate:quinone oxidoreductase, found in Prochlorococcus marinus subsp. pastoris (strain CCMP1986 / NIES-2087 / MED4).